The primary structure comprises 86 residues: Putative membrane protein insertion efficiency factor (86 aa).

Residues 67-86 (LHEGGDDPVPPVKNNDNREH) form a disordered region.

Belongs to the UPF0161 family.

The protein resides in the cell inner membrane. Functionally, could be involved in insertion of integral membrane proteins into the membrane. The chain is Putative membrane protein insertion efficiency factor from Photorhabdus laumondii subsp. laumondii (strain DSM 15139 / CIP 105565 / TT01) (Photorhabdus luminescens subsp. laumondii).